We begin with the raw amino-acid sequence, 297 residues long: Phosphatidylglycerol--prolipoprotein diacylglyceryl transferase (297 aa).

The next 4 helical transmembrane spans lie at Phe-20–Ile-40, Ile-58–Glu-78, Ile-104–Ile-124, and Ile-133–Gly-153. Arg-154 contributes to the a 1,2-diacyl-sn-glycero-3-phospho-(1'-sn-glycerol) binding site. 3 helical membrane passes run Thr-194–Tyr-214, Gly-225–Leu-245, and Ala-266–Leu-286.

Belongs to the Lgt family.

It localises to the cell inner membrane. The enzyme catalyses L-cysteinyl-[prolipoprotein] + a 1,2-diacyl-sn-glycero-3-phospho-(1'-sn-glycerol) = an S-1,2-diacyl-sn-glyceryl-L-cysteinyl-[prolipoprotein] + sn-glycerol 1-phosphate + H(+). The protein operates within protein modification; lipoprotein biosynthesis (diacylglyceryl transfer). In terms of biological role, catalyzes the transfer of the diacylglyceryl group from phosphatidylglycerol to the sulfhydryl group of the N-terminal cysteine of a prolipoprotein, the first step in the formation of mature lipoproteins. This is Phosphatidylglycerol--prolipoprotein diacylglyceryl transferase from Prochlorococcus marinus subsp. pastoris (strain CCMP1986 / NIES-2087 / MED4).